Reading from the N-terminus, the 206-residue chain is Protein GrpE (206 aa).

A compositionally biased stretch (basic and acidic residues) spans 1-10 (MTDPDLHQND). The segment at 1–38 (MTDPDLHQNDPENPAQASEPVVSKPYIMPDDPETGSAE) is disordered.

It belongs to the GrpE family. As to quaternary structure, homodimer.

It localises to the cytoplasm. Functionally, participates actively in the response to hyperosmotic and heat shock by preventing the aggregation of stress-denatured proteins, in association with DnaK and GrpE. It is the nucleotide exchange factor for DnaK and may function as a thermosensor. Unfolded proteins bind initially to DnaJ; upon interaction with the DnaJ-bound protein, DnaK hydrolyzes its bound ATP, resulting in the formation of a stable complex. GrpE releases ADP from DnaK; ATP binding to DnaK triggers the release of the substrate protein, thus completing the reaction cycle. Several rounds of ATP-dependent interactions between DnaJ, DnaK and GrpE are required for fully efficient folding. The chain is Protein GrpE from Bradyrhizobium sp. (strain ORS 278).